Consider the following 148-residue polypeptide: NADPH-dependent 7-cyano-7-deazaguanine reductase (148 aa).

Cys-50 (thioimide intermediate) is an active-site residue. Catalysis depends on Asp-57, which acts as the Proton donor. Substrate-binding positions include 72-74 and 91-92; these read VES and HE.

This sequence belongs to the GTP cyclohydrolase I family. QueF type 1 subfamily.

It localises to the cytoplasm. The enzyme catalyses 7-aminomethyl-7-carbaguanine + 2 NADP(+) = 7-cyano-7-deazaguanine + 2 NADPH + 3 H(+). The protein operates within tRNA modification; tRNA-queuosine biosynthesis. In terms of biological role, catalyzes the NADPH-dependent reduction of 7-cyano-7-deazaguanine (preQ0) to 7-aminomethyl-7-deazaguanine (preQ1). This Helicobacter pylori (strain G27) protein is NADPH-dependent 7-cyano-7-deazaguanine reductase.